Here is a 568-residue protein sequence, read N- to C-terminus: Cytosolic purine 5'-nucleotidase (568 aa).

Aspartate 52 serves as the catalytic Nucleophile. IMP-binding residues include aspartate 52 and aspartate 54. The Mg(2+) site is built by aspartate 52 and aspartate 54. The active-site Proton donor is the aspartate 54. 2 residues coordinate ATP: arginine 144 and asparagine 154. The IMP site is built by arginine 202, aspartate 206, lysine 215, threonine 249, asparagine 250, serine 251, and lysine 292. Residue aspartate 351 coordinates Mg(2+). Positions 453 and 456 each coordinate ATP. The tract at residues 528 to 568 (ISEIKPPNLFPQKPQEITHCHDEDDDEEEEEEEEEEEEEEE) is disordered. Positions 548-568 (HDEDDDEEEEEEEEEEEEEEE) are required for tetramer assembly. The span at 550-568 (EDDDEEEEEEEEEEEEEEE) shows a compositional bias: acidic residues.

This sequence belongs to the 5'(3')-deoxyribonucleotidase family. In terms of assembly, homotetramer. It depends on Mg(2+) as a cofactor.

The protein localises to the cytoplasm. The protein resides in the cytosol. The catalysed reaction is a ribonucleoside 5'-phosphate + H2O = a ribonucleoside + phosphate. The enzyme catalyses a 2'-deoxyribonucleoside + a ribonucleoside 5'-phosphate = a ribonucleoside + a 2'-deoxyribonucleoside 5'-phosphate. It carries out the reaction IMP + H2O = inosine + phosphate. It catalyses the reaction GMP + H2O = guanosine + phosphate. The catalysed reaction is dIMP + H2O = 2'-deoxyinosine + phosphate. The enzyme catalyses dGMP + H2O = 2'-deoxyguanosine + phosphate. It carries out the reaction XMP + H2O = xanthosine + phosphate. It catalyses the reaction inosine + GMP = guanosine + IMP. The catalysed reaction is dGMP + inosine = 2'-deoxyguanosine + IMP. The enzyme catalyses dIMP + inosine = 2'-deoxyinosine + IMP. It carries out the reaction inosine + UMP = uridine + IMP. It catalyses the reaction inosine + CMP = cytidine + IMP. The catalysed reaction is inosine + AMP = IMP + adenosine. Allosterically activated by various compounds including ATP, 2,3-BPG/2,3-Bisphosphoglyceric acid and Ap4A/P1,P4-bis(5'-adenosyl) tetraphosphate. Binding of an allosteric activator is a prerequisiste to magnesium and substrate binding. Inhibited by inorganic phosphate. Functionally, broad specificity cytosolic 5'-nucleotidase that catalyzes the dephosphorylation of 6-hydroxypurine nucleoside 5'-monophosphates. In addition, possesses a phosphotransferase activity by which it can transfer a phosphate from a donor nucleoside monophosphate to an acceptor nucleoside, preferably inosine, deoxyinosine and guanosine. Has the highest activities for IMP and GMP followed by dIMP, dGMP and XMP. Could also catalyze the transfer of phosphates from pyrimidine monophosphates but with lower efficiency. Through these activities regulates the purine nucleoside/nucleotide pools within the cell. This chain is Cytosolic purine 5'-nucleotidase (nt5c2), found in Xenopus tropicalis (Western clawed frog).